The sequence spans 275 residues: Protein unc-50 homolog (275 aa).

Over residues 1 to 26 (MTQYSHVKYTQSPTPSVVSGYSSASR) the composition is skewed to polar residues. The disordered stretch occupies residues 1–39 (MTQYSHVKYTQSPTPSVVSGYSSASRLHSPLPPPANHRR). Residues 1 to 99 (MTQYSHVKYT…TKSQFARDDP (99 aa)) are Cytoplasmic-facing. The chain crosses the membrane as a helical span at residues 100–120 (AFLVLLVVCLCVTSLGFAYVL). The Lumenal segment spans residues 121-129 (GLSFWQSIS). A helical membrane pass occupies residues 130-150 (FIFYVVFVDCIFVGIIIASFF). Residues 151–178 (WAVTNRYLRTNSLEPDIEWGYAFDVHLN) lie on the Cytoplasmic side of the membrane. Residues 179–199 (AFFPPLMLLHFIQLFFYNWLI) traverse the membrane as a helical segment. Topologically, residues 200 to 207 (SQTWFISR) are lumenal. Residues 208–228 (FLGNTFWLMGMGYYVYITFLG) traverse the membrane as a helical segment. The Cytoplasmic portion of the chain corresponds to 229–239 (YNCIPHLKNTR). The helical transmembrane segment at 240 to 260 (IILIALPIIFLLFLVVTIIGW) threads the bilayer. Over 261–275 (NATISFVNFYKYRVY) the chain is Lumenal.

Belongs to the unc-50 family.

Its subcellular location is the golgi apparatus membrane. Its function is as follows. Required for cell surface expression of acetylcholine receptors. This is Protein unc-50 homolog from Drosophila melanogaster (Fruit fly).